A 207-amino-acid chain; its full sequence is ATP-dependent Clp protease proteolytic subunit (207 aa).

The active-site Nucleophile is Ser-111. His-136 is an active-site residue.

The protein belongs to the peptidase S14 family. Fourteen ClpP subunits assemble into 2 heptameric rings which stack back to back to give a disk-like structure with a central cavity, resembling the structure of eukaryotic proteasomes.

The protein resides in the cytoplasm. It carries out the reaction Hydrolysis of proteins to small peptides in the presence of ATP and magnesium. alpha-casein is the usual test substrate. In the absence of ATP, only oligopeptides shorter than five residues are hydrolyzed (such as succinyl-Leu-Tyr-|-NHMec, and Leu-Tyr-Leu-|-Tyr-Trp, in which cleavage of the -Tyr-|-Leu- and -Tyr-|-Trp bonds also occurs).. Cleaves peptides in various proteins in a process that requires ATP hydrolysis. Has a chymotrypsin-like activity. Plays a major role in the degradation of misfolded proteins. The sequence is that of ATP-dependent Clp protease proteolytic subunit from Aliivibrio fischeri (strain ATCC 700601 / ES114) (Vibrio fischeri).